We begin with the raw amino-acid sequence, 233 residues long: Adenosine 5'-phosphosulfate reductase 1 (233 aa).

C120, C121, C203, and C206 together coordinate [4Fe-4S] cluster. C229 functions as the Nucleophile; cysteine thiosulfonate intermediate in the catalytic mechanism.

It belongs to the PAPS reductase family. CysH subfamily. [4Fe-4S] cluster is required as a cofactor.

Its subcellular location is the cytoplasm. It carries out the reaction [thioredoxin]-disulfide + sulfite + AMP + 2 H(+) = adenosine 5'-phosphosulfate + [thioredoxin]-dithiol. Its pathway is sulfur metabolism; hydrogen sulfide biosynthesis; sulfite from sulfate. Functionally, catalyzes the formation of sulfite from adenosine 5'-phosphosulfate (APS) using thioredoxin as an electron donor. The protein is Adenosine 5'-phosphosulfate reductase 1 (cysH) of Bacillus subtilis (strain 168).